The following is a 763-amino-acid chain: Phosphoglycerol transferase I (763 aa).

The next 4 helical transmembrane spans lie at 1–21 (MSEL…AWKA), 26–46 (WWFA…ITLF), 77–97 (ILPG…LGWI), and 108–128 (FGYS…SPAF).

Belongs to the OpgB family.

The protein resides in the cell inner membrane. It catalyses the reaction a phosphatidylglycerol + a membrane-derived-oligosaccharide D-glucose = a 1,2-diacyl-sn-glycerol + a membrane-derived-oligosaccharide 6-(glycerophospho)-D-glucose.. The protein operates within glycan metabolism; osmoregulated periplasmic glucan (OPG) biosynthesis. Functionally, transfers a phosphoglycerol residue from phosphatidylglycerol to the membrane-bound nascent glucan backbones. The protein is Phosphoglycerol transferase I of Escherichia coli O7:K1 (strain IAI39 / ExPEC).